Here is a 320-residue protein sequence, read N- to C-terminus: Putative olfactory receptor 2W5 pseudogene (320 aa).

N-linked (GlcNAc...) asparagine glycosylation occurs at Asn5. 4 consecutive transmembrane segments (helical) span residues Val30 to Val50, Pro58 to Ala78, Val98 to Met118, and Leu140 to Cys160. Cys97 and Cys179 are oxidised to a cystine. A disordered region spans residues Leu267–Leu320. Positions Leu290–Thr304 are enriched in basic and acidic residues.

The protein belongs to the G-protein coupled receptor 1 family.

Its subcellular location is the cell membrane. Its function is as follows. Odorant receptor. This chain is Putative olfactory receptor 2W5 pseudogene, found in Homo sapiens (Human).